Consider the following 314-residue polypeptide: MSDTKSEIEGFIAIPTTSGEQQQQQPQQQQNEQQVVGTKDIKAPDQVGKKQRPRLIQEKSTQETNPLILEHATLEWVPQHMDKLLNQYQECRKMPAAEWLHLLTYLVALECGFVEEETFAQKRHLIQPVPSFSSFHAQNVRILSEQPARYEVCFNDTVYIMRLRTLLDKHAPEETSLVAALQCRLMAVSLGDQLMITLSPAPPSKEPGYSVSLSIGRYVLNIQAKNKPIYHRFRKLDELSYQLKQHLFQPMRSQQLMQMEMKLQPSLLGLPDELYFEIFRYLDKSQLNVVARVNRHLHFYSKEVERKRLKGGRS.

The segment at 1–62 is disordered; sequence MSDTKSEIEG…PRLIQEKSTQ (62 aa). The span at 21–34 shows a compositional bias: low complexity; sequence QQQQQPQQQQNEQQ. Residues 257 to 314 are required for interaction with skpA and Cul1, but not with PI31; that stretch reads MQMEMKLQPSLLGLPDELYFEIFRYLDKSQLNVVARVNRHLHFYSKEVERKRLKGGRS. An F-box domain is found at 264–309; the sequence is QPSLLGLPDELYFEIFRYLDKSQLNVVARVNRHLHFYSKEVERKRL.

Component of an SCF (SKP1-CUL1-F-box protein) E3 ubiquitin-protein ligase complex, at least composed of ntc, skpA and Cul1. Interacts (via F-box domain) with skpA and Cul1. Interacts with Prosalpha7 and PI31. Interacts with Bruce. In terms of tissue distribution, expressed in testis (at protein level).

Its subcellular location is the cytoplasm. Functionally, functions together with PI31 to control non-apoptotic caspase activation during sperm individualization. Positively regulates PI31 stability. In Drosophila melanogaster (Fruit fly), this protein is Protein nutcracker.